The sequence spans 306 residues: N-acetylmuramic acid 6-phosphate etherase (306 aa).

The SIS domain occupies 62-225; the sequence is IAQAFQNGGR…TTASMIRIGK (164 aa). The active-site Proton donor is the glutamate 90. Glutamate 121 is an active-site residue.

It belongs to the GCKR-like family. MurNAc-6-P etherase subfamily. Homodimer.

It catalyses the reaction N-acetyl-D-muramate 6-phosphate + H2O = N-acetyl-D-glucosamine 6-phosphate + (R)-lactate. It functions in the pathway amino-sugar metabolism; 1,6-anhydro-N-acetylmuramate degradation. Its pathway is amino-sugar metabolism; N-acetylmuramate degradation. It participates in cell wall biogenesis; peptidoglycan recycling. In terms of biological role, specifically catalyzes the cleavage of the D-lactyl ether substituent of MurNAc 6-phosphate, producing GlcNAc 6-phosphate and D-lactate. Together with AnmK, is also required for the utilization of anhydro-N-acetylmuramic acid (anhMurNAc) either imported from the medium or derived from its own cell wall murein, and thus plays a role in cell wall recycling. This is N-acetylmuramic acid 6-phosphate etherase from Vibrio atlanticus (strain LGP32) (Vibrio splendidus (strain Mel32)).